A 614-amino-acid chain; its full sequence is MEERAAVEYWGDYKVIAELGHGLWSRDVLAEHRFIKKRYILKILPSELSSSENFMRVFQEVIVQLAAIRHASLVAIENVSREGDRYFVVTEENGGTISLAQYLSGRKLSEEEVVHLIQQLCDALELVHSIGLAHGQIHLHSVHVSFFNGIANIYLPEVGFASLLRERMFSTIMQSGSARESITRIRDLLMFEAPEEQEVFGREADVYSVGVLAYYLLVGSFPWGSFPKPSLCMPDSWYDWDGFILSCLQQQREARPKCLREALRRKTSGEQLQVTLDSCREPLREMEIEDTPTELGPPSALIREGERLCEVKEEQHAFVLVEAKSIDEAMVTTVDSEEELESSEGYANPLQSLLAREPVVSRYVEVEREEIKPQPLLTEMIFIEGGEFSRGSGDGQRDELPVHNITLPGFFLDIHPVTNEQFVRFLECVGSEQDEHYNELIRLKDSRIQRRSGRLIIEPGYAKHPVVGVTWYGASSYACWIGKRLPSEAEWEVAASGGKLGLRYPTGEEIDKSKANFFSSDTTPVMSYPSSILGLYDMAGNVYEWCQDWYSYDFYESSALEPDAPLGPPQGVYRVLRGGCWKSLKDDLRCAHRHRNNPGAINSTYGFRCAKDVK.

The Protein kinase domain maps to 13-276 (YKVIAELGHG…TSGEQLQVTL (264 aa)). ATP-binding positions include 19 to 27 (LGHGLWSRD) and Lys42.

This sequence belongs to the protein kinase superfamily. Ser/Thr protein kinase family. In terms of assembly, interacts with PknD, interacts with and phosphorylates IncG. Post-translationally, autophosphorylates on serine and threonine residues. Present in elementary bodies 40 hours post-infection as 2 proteins of approximately 70 and 65 kDa; the smaller one may be due to differential phosphorylation or degradation.

It catalyses the reaction L-seryl-[protein] + ATP = O-phospho-L-seryl-[protein] + ADP + H(+). The enzyme catalyses L-threonyl-[protein] + ATP = O-phospho-L-threonyl-[protein] + ADP + H(+). In terms of biological role, together with the serine/threonine kinase PknD, may play a role in specific interactions with host proteins during host intracellular growth. Autophosphorylates and phosphorylates IncG, an inclusion-membrane protein required for the modification of the nascent chlamydial inclusion. The protein is Serine/threonine-protein kinase Pkn1 (pkn1) of Chlamydia trachomatis serovar L2 (strain ATCC VR-902B / DSM 19102 / 434/Bu).